The following is a 473-amino-acid chain: 3-isopropylmalate dehydratase large subunit (473 aa).

[4Fe-4S] cluster contacts are provided by Cys-354, Cys-414, and Cys-417. The disordered stretch occupies residues Leu-425–Arg-448.

Belongs to the aconitase/IPM isomerase family. LeuC type 1 subfamily. In terms of assembly, heterodimer of LeuC and LeuD. The cofactor is [4Fe-4S] cluster.

It catalyses the reaction (2R,3S)-3-isopropylmalate = (2S)-2-isopropylmalate. It participates in amino-acid biosynthesis; L-leucine biosynthesis; L-leucine from 3-methyl-2-oxobutanoate: step 2/4. Its function is as follows. Catalyzes the isomerization between 2-isopropylmalate and 3-isopropylmalate, via the formation of 2-isopropylmaleate. The chain is 3-isopropylmalate dehydratase large subunit from Acidothermus cellulolyticus (strain ATCC 43068 / DSM 8971 / 11B).